A 666-amino-acid chain; its full sequence is uncharacterized protein (666 aa).

This is an uncharacterized protein from Invertebrate iridescent virus 6 (IIV-6).